The primary structure comprises 517 residues: Serine hydroxymethyltransferase 1, mitochondrial (517 aa).

Residues Met1–Ser30 constitute a mitochondrion transit peptide. The residue at position 286 (Lys286) is an N6-(pyridoxal phosphate)lysine.

Belongs to the SHMT family. Homotetramer. Interacts with GLU1. Interacts with UBP16. The cofactor is pyridoxal 5'-phosphate. In terms of processing, ubiquitinated. As to expression, ubiquitous. Mostly expressed in leaves, less abundant in stems, flowers and siliques, and barely detectable in roots.

The protein resides in the mitochondrion. It localises to the cytoplasm. The catalysed reaction is (6R)-5,10-methylene-5,6,7,8-tetrahydrofolate + glycine + H2O = (6S)-5,6,7,8-tetrahydrofolate + L-serine. Its pathway is one-carbon metabolism; tetrahydrofolate interconversion. Functionally, functions in the photorespiratory pathway in catalyzing the interconversion of serine and glycine. Involved in controlling cell damage caused by abiotic stress, such as high light and salt and the hypersensitive defense response of plants. This chain is Serine hydroxymethyltransferase 1, mitochondrial, found in Arabidopsis thaliana (Mouse-ear cress).